A 472-amino-acid polypeptide reads, in one-letter code: MIAATPAKSKPSDVNLEQTFKGVSETSKIDLRRSRAAYRPLELSPTPSIFARNYQRNAVDFTGFFVLFWVAVSIMIFMSFLENFELTGRPVVGTIFKYFQSNLLDLAKADLAMSSMFLLAFPFQKIFALGYLRWYGLGVYLYSILILLFLSHCVLRCCLSNWSWTHRAMFILHSMVILMKLHSYNVVNGWYSYCYHSLNKLQSKKTDLDDDERSSVEFYEHCLNHHGNTYPENLTIPNALDFLFMPSLCYQLYYPRTAHVRIHYLIECALGTFGCIFLLVIISDHFMVPVLAKAIRTIIEAPEDASATYFAIRLGHTVAFLMFPFMLSFLLVFWVIFEGVCNFSAEITRFADRNFYDDWWNCWTWDQFARTWNKPVHYFLLRHVYVPLNSFMSKSLSTFFTFFVSSVLHELVMGCITLKIRGYGLFFQMTQIPYIIIQRQKFVRRHRLLGNIAFWFSIIIGIALIAALYILF.

Ser-12 carries the post-translational modification Phosphoserine. The next 3 membrane-spanning stretches (helical) occupy residues 61–81, 111–131, and 135–155; these read FTGF…MSFL, LAMS…ALGY, and YGLG…HCVL. A glycan (N-linked (GlcNAc...) asparagine) is linked at Asn-161. Residues 170-190 form a helical membrane-spanning segment; sequence FILHSMVILMKLHSYNVVNGW. The N-linked (GlcNAc...) asparagine glycan is linked to Asn-233. The next 2 membrane-spanning stretches (helical) occupy residues 262–282 and 317–337; these read IHYL…LVII and TVAF…WVIF. Asn-342 is a glycosylation site (N-linked (GlcNAc...) asparagine). The FYXDWWN motif signature appears at 355–361; the sequence is FYDDWWN. His-409 is an active-site residue. The chain crosses the membrane as a helical span at residues 452 to 472; that stretch reads IAFWFSIIIGIALIAALYILF.

Belongs to the membrane-bound acyltransferase family. Sterol o-acyltransferase subfamily.

Its subcellular location is the endoplasmic reticulum membrane. Sterol O-acyltransferase that catalyzes the formation of stery esters. In Schizosaccharomyces pombe (strain 972 / ATCC 24843) (Fission yeast), this protein is Probable sterol O-acyltransferase 2 (are2).